A 302-amino-acid chain; its full sequence is Sushi domain-containing protein 6 (302 aa).

The signal sequence occupies residues Met1–Ala39. The Sushi domain maps to Ser40–Leu104. Disulfide bonds link Cys42–Cys89 and Cys74–Cys102. Residues Ile120–Leu140 traverse the membrane as a helical segment. Disordered regions lie at residues Gly202–Trp241 and Thr256–Ala302. 3 stretches are compositionally biased toward polar residues: residues Arg212 to Cys222, Thr256 to Arg267, and Ser279 to Glu290.

The protein localises to the membrane. Functionally, may play a role in growth-suppressive activity and cell death. May be involved in the production of chemokine molecules in umbilical vein endothelial cells (HUVECs) cultured in THP1 monocyte LPS-induced medium. Plays a role in preventing tumor onset. The sequence is that of Sushi domain-containing protein 6 from Mus musculus (Mouse).